We begin with the raw amino-acid sequence, 181 residues long: MDDLTAQALKDFTARYCDAWHEEHKSWPLSEELYGVPSPCIISTTEDAVYWQPQPFTGEQNVNAVERAFDIVIQPTIHTFYTTQFAGDMHAQFGDIKLTLLQTWSEDDFRRVQENLIGHLVTQKRLKLPPTLFIATLEEELEVISVCNLSGEVCKETLGTRKRAHLASNLAEFLNQLKPLL.

This sequence belongs to the Syd family.

Its subcellular location is the cell inner membrane. Its function is as follows. Interacts with the SecY protein in vivo. May bind preferentially to an uncomplexed state of SecY, thus functioning either as a chelating agent for excess SecY in the cell or as a regulatory factor that negatively controls the translocase function. In Escherichia coli O17:K52:H18 (strain UMN026 / ExPEC), this protein is Protein Syd.